Consider the following 329-residue polypeptide: Adenylate isopentenyltransferase (329 aa).

Residues Gly-37–Ser-44, Lys-63, Thr-74, Ser-129–Ser-131, Lys-220–Ile-222, and Lys-313 contribute to the ATP site.

This sequence belongs to the IPP transferase family. Mg(2+) serves as cofactor. Expressed in roots, stems, leaves and cones.

It catalyses the reaction dimethylallyl diphosphate + AMP = N(6)-(dimethylallyl)adenosine 5'-phosphate + diphosphate. The catalysed reaction is dimethylallyl diphosphate + ADP = N(6)-(dimethylallyl)adenosine 5'-diphosphate + diphosphate. It carries out the reaction dimethylallyl diphosphate + ATP = N(6)-(dimethylallyl)adenosine 5'-triphosphate + diphosphate. Its function is as follows. Involved in cytokinin biosynthesis. Catalyzes the transfer of an isopentenyl group from dimethylallyl diphosphate (DMAPP) to ATP, ADP and AMP. GMP, IMP, CMP or UMP are not used as substrates. This Humulus lupulus (European hop) protein is Adenylate isopentenyltransferase.